Consider the following 183-residue polypeptide: Transposon gamma-delta resolvase (183 aa).

Residues Arg-2–Gly-137 form the Resolvase/invertase-type recombinase catalytic domain. Residue Ser-10 is the O-(5'-phospho-DNA)-serine intermediate of the active site. A DNA-binding region (H-T-H motif) is located at residues Ala-161 to Asn-180.

The protein belongs to the site-specific recombinase resolvase family.

Its function is as follows. This protein catalyzes the site-specific recombination of the transposon and also regulates its frequency of transposition. The sequence is that of Transposon gamma-delta resolvase (tnpR) from Escherichia coli (strain K12).